A 438-amino-acid polypeptide reads, in one-letter code: Fumarate hydratase class II (438 aa).

Residues Ser-76–Thr-78, His-101–Asp-104, Ser-111–Asn-113, and Thr-159 contribute to the substrate site. His-160 (proton donor/acceptor) is an active-site residue. Ser-291 is a catalytic residue. Residues Ser-292 and Lys-297–Asn-299 each bind substrate.

This sequence belongs to the class-II fumarase/aspartase family. Fumarase subfamily. As to quaternary structure, homotetramer.

The protein localises to the cytoplasm. It carries out the reaction (S)-malate = fumarate + H2O. It functions in the pathway carbohydrate metabolism; tricarboxylic acid cycle; (S)-malate from fumarate: step 1/1. Its function is as follows. Involved in the TCA cycle. Catalyzes the stereospecific interconversion of fumarate to L-malate. The chain is Fumarate hydratase class II from Saccharolobus solfataricus (strain ATCC 35092 / DSM 1617 / JCM 11322 / P2) (Sulfolobus solfataricus).